Reading from the N-terminus, the 422-residue chain is Inner membrane ALBINO3-like protein 2, chloroplastic (422 aa).

The segment covering 1–10 (MALQMKQSPS) has biased composition (polar residues). Positions 1-22 (MALQMKQSPSMGVRRASQPVLP) are disordered. A helical transmembrane segment spans residues 65–85 (LYTLAEGGPIDVLAQFFEFVL). The Stromal portion of the chain corresponds to 86 to 96 (QTLDEGLESAK). A helical transmembrane segment spans residues 97 to 117 (IPYSYGFAIIALTVLVKVATF). Residues 118-166 (PLTQKQVESTLSLQALQPRVKELQAKYADDPENLQLETARLYKEAGVNP) lie on the Lumenal side of the membrane. A helical transmembrane segment spans residues 167–187 (LAGCFPTLATIPVFIGLYNAL). Topologically, residues 188–225 (SNAAKEGLLTEGFFWIPSLGGPTTIGGGLEWLVPFENG) are stromal. A helical membrane pass occupies residues 226–246 (APPVGWANAAAYLVMPVLLVA). The Lumenal segment spans residues 247–275 (SQYASQKIISSQNNQDPSQQQAQAILKFL). The helical transmembrane segment at 276 to 296 (PLMIGWFSLNVPSGLTLYWFV) threads the bilayer. Over 297–422 (NNLLSTGQQL…GSEEGKDNSA (126 aa)) the chain is Stromal. A disordered region spans residues 325–422 (TAGSSTPIVK…GSEEGKDNSA (98 aa)). A compositionally biased stretch (basic and acidic residues) spans 334–350 (KPKEERVKKVTGKELGS). A compositionally biased stretch (acidic residues) spans 358–367 (DGEEVEDVEV). Residues 368–380 (EVVSSGSSSSSGS) show a composition bias toward low complexity. Residues 386–400 (RKGEKFRALKAREAA) are compositionally biased toward basic and acidic residues.

It belongs to the OXA1/ALB3/YidC (TC 2.A.9.2) family.

Its subcellular location is the plastid. It is found in the chloroplast thylakoid membrane. Required for the insertion of some light-harvesting complexes (LHC) proteins into the chloroplast thylakoid membrane. Essential for the assembly and activity of LHC I and II. Its function is probably partly distinct from that of ALB3.1. This Chlamydomonas reinhardtii (Chlamydomonas smithii) protein is Inner membrane ALBINO3-like protein 2, chloroplastic (ALB3.2).